The sequence spans 387 residues: Probable peptidoglycan glycosyltransferase FtsW (387 aa).

9 helical membrane passes run 20–40 (LYLL…VGSA), 61–81 (LFLL…LAFW), 86–106 (PVML…GIGV), 149–169 (TIRG…LLLL), 172–192 (DFGA…LGGA), 194–214 (LWHF…LAWY), 284–304 (LMGS…VLLI), 322–342 (GLGI…MGVL), and 349–369 (LPLM…VALI).

Belongs to the SEDS family. FtsW subfamily.

Its subcellular location is the cell inner membrane. The enzyme catalyses [GlcNAc-(1-&gt;4)-Mur2Ac(oyl-L-Ala-gamma-D-Glu-L-Lys-D-Ala-D-Ala)](n)-di-trans,octa-cis-undecaprenyl diphosphate + beta-D-GlcNAc-(1-&gt;4)-Mur2Ac(oyl-L-Ala-gamma-D-Glu-L-Lys-D-Ala-D-Ala)-di-trans,octa-cis-undecaprenyl diphosphate = [GlcNAc-(1-&gt;4)-Mur2Ac(oyl-L-Ala-gamma-D-Glu-L-Lys-D-Ala-D-Ala)](n+1)-di-trans,octa-cis-undecaprenyl diphosphate + di-trans,octa-cis-undecaprenyl diphosphate + H(+). Its pathway is cell wall biogenesis; peptidoglycan biosynthesis. Peptidoglycan polymerase that is essential for cell division. The protein is Probable peptidoglycan glycosyltransferase FtsW of Nitrosococcus halophilus (strain Nc4).